A 1461-amino-acid polypeptide reads, in one-letter code: Autotransporter adhesin SadA (1461 aa).

The signal sequence occupies residues 1–54; sequence MNRIFKVLWNAATGTFVVTSETAKSRGKKNGRRKLAVSALIGLSSIMVSADALA. Residues 55–1372 are surface exposed passenger domain; that stretch reads NAGNDTGDGV…EEANTYTDQK (1318 aa). Residues 1373 to 1461 are translocator domain; that stretch reads MGEMNSKIKG…SAAIGAGFQW (89 aa). Beta stranded transmembrane passes span 1407 to 1417, 1421 to 1431, 1440 to 1446, and 1450 to 1461; these read GANMTSIAGGT, ESAVAIGVSMV, KLQGTSN, and DYSAAIGAGFQW.

The protein belongs to the autotransporter-2 (AT-2) (TC 1.B.40) family. In terms of assembly, homotrimer.

The protein resides in the cell surface. It is found in the cell outer membrane. In terms of biological role, involved in cell aggregation, biofilm formation, and adhesion to human intestinal epithelial cells. This Salmonella typhimurium (strain LT2 / SGSC1412 / ATCC 700720) protein is Autotransporter adhesin SadA.